We begin with the raw amino-acid sequence, 409 residues long: MPFSSEQFTTKLNTLEDSQESISSASKWLLLQYRDAPKVAEMWKEYMLRPSVNTRRKLLGLYLMNHVVQQAKGQKIIQFQDSFGKVAAEVLGRINQEFPRDLKKKLSRVVNILKERNIFSKQVVNDIERSLKTESSPVEALVLPQKLKDFAKDYEKLVKMHHNVCAMKMRFDKSSDELDPSSSVYEENFKTISKIGNMAKDIINESILKRESGIHKLQSTLDDEKRHLDEEQNMLSEIEFVLSAKDPSRLNKNVDEDNIIPTYEVGDGDDDDDDGDNDDDDDDDDDDKNYDDRSNDSNYGVTNISTTDKKNEVVEKTDSEHKNSTHNPSDNQFGMKRTHDMIGHDDANDIPEKKVHLDSKTSEDGTFNSEDGHYELDIEGHVGAQTDEGVENSGGVSSSIQDLLSKLAN.

In terms of domain architecture, CID spans 1 to 135; sequence MPFSSEQFTT…DIERSLKTES (135 aa). The interval 250-409 is disordered; it reads LNKNVDEDNI…IQDLLSKLAN (160 aa). The segment covering 266–289 has biased composition (acidic residues); sequence GDGDDDDDDGDNDDDDDDDDDDKN. Composition is skewed to basic and acidic residues over residues 307–323, 337–363, and 370–380; these read TDKK…EHKN, RTHD…KTSE, and EDGHYELDIEG.

Belongs to the UPF0400 (RTT103) family. As to quaternary structure, interacts with PCF11, RAI1, RAT1, RPO21 and RBP2.

It is found in the nucleus. Its function is as follows. Involved in transcription termination by RNA polymerase II and in regulation of Ty1 transposition. The chain is Regulator of Ty1 transposition protein 103 (RTT103) from Saccharomyces cerevisiae (strain ATCC 204508 / S288c) (Baker's yeast).